We begin with the raw amino-acid sequence, 76 residues long: uncharacterized protein (76 aa).

This sequence to K.pneumoniae LtrA, E.coli YjiE, and YhcS.

This is an uncharacterized protein from Escherichia coli O6:H1 (strain CFT073 / ATCC 700928 / UPEC).